We begin with the raw amino-acid sequence, 443 residues long: MAKFEDKVDLYDDRGNLVEEQVPLEALSPLRNPAIKSIVQGIKRTVAVNLEGIENALKTAKVGGPACKIMGRELDLDIVGNAESIAAAAKEMIQVTEDDDTKVELLGGGKRALVQVPSARFDVAAEYSAAPLVTATAFVQAIINEFDVSMYDANMVKAAVLGRYPQSVEYMGANIATMLDIPQKLEGPGYALRNIMVNHVVAATLKNTLQAAALSTILEQTAMFEMGDAVGAFERMHLLGLAYQGMNADNLVFDLVKANGKEGTVGSVIADLVERALEDGVIKVEKELTDYKVYGTDDLAMWNAYAAAGLMAATMVNQGAARAAQGVSSTLLYYNDLIEFETGLPGVDFGKVEGTAVGFSFFSHSIYGGGGPGIFNGNHIVTRHSKGFAIPCVAAAMALDAGTQMFSPEATSGLIKEVFSQVDEFREPLKYVVEAAAEIKNEI.

A coenzyme M-binding site is contributed by Y367. Position 369 (G369) interacts with coenzyme B.

It belongs to the methyl-coenzyme M reductase beta subunit family. MCR is a hexamer of two alpha, two beta, and two gamma chains, forming a dimer of heterotrimers. Coenzyme F430 serves as cofactor.

The protein localises to the cytoplasm. It carries out the reaction coenzyme B + methyl-coenzyme M = methane + coenzyme M-coenzyme B heterodisulfide. The protein operates within one-carbon metabolism; methyl-coenzyme M reduction; methane from methyl-coenzyme M: step 1/1. Functionally, component of the methyl-coenzyme M reductase (MCR) I that catalyzes the reductive cleavage of methyl-coenzyme M (CoM-S-CH3 or 2-(methylthio)ethanesulfonate) using coenzyme B (CoB or 7-mercaptoheptanoylthreonine phosphate) as reductant which results in the production of methane and the mixed heterodisulfide of CoB and CoM (CoM-S-S-CoB). This is the final step in methanogenesis. This chain is Methyl-coenzyme M reductase I subunit beta (mcrB), found in Methanothermobacter thermautotrophicus (strain ATCC 29096 / DSM 1053 / JCM 10044 / NBRC 100330 / Delta H) (Methanobacterium thermoautotrophicum).